Reading from the N-terminus, the 335-residue chain is Mitochondrial amidoxime reducing component 2 (335 aa).

Residues 1-35 (MGASSSSALARLGLPAQARPRWLGVAVLGLAAVAL) constitute a mitochondrion transit peptide. Residues K59, K138, and K144 each participate in a glycyl lysine isopeptide (Lys-Gly) (interchain with G-Cter in ubiquitin) cross-link. Position 156 is an N6-acetyllysine; alternate (K156). K156 participates in a covalent cross-link: Glycyl lysine isopeptide (Lys-Gly) (interchain with G-Cter in ubiquitin); alternate. Residues K173, K187, K287, and K294 each participate in a glycyl lysine isopeptide (Lys-Gly) (interchain with G-Cter in ubiquitin) cross-link. The 147-residue stretch at 188–334 (GRTSRKLLPT…LRVGDPVYRM (147 aa)) folds into the MOSC domain.

In terms of assembly, component of a complex composed of cytochrome b5, NADH-cytochrome b5 reductase (CYB5R3) and MTARC2. Mo-molybdopterin is required as a cofactor. Post-translationally, ubiquitinated by PRKN during mitophagy, leading to its degradation and enhancement of mitophagy. Deubiquitinated by USP30.

It is found in the mitochondrion outer membrane. The protein resides in the peroxisome. The catalysed reaction is N(omega)-hydroxy-L-arginine + 2 Fe(II)-[cytochrome b5] + 2 H(+) = L-arginine + 2 Fe(III)-[cytochrome b5] + H2O. Functionally, catalyzes the reduction of N-oxygenated molecules, acting as a counterpart of cytochrome P450 and flavin-containing monooxygenases in metabolic cycles. As a component of prodrug-converting system, reduces a multitude of N-hydroxylated prodrugs particularly amidoximes, leading to increased drug bioavailability. May be involved in mitochondrial N(omega)-hydroxy-L-arginine (NOHA) reduction, regulating endogenous nitric oxide levels and biosynthesis. Postulated to cleave the N-OH bond of N-hydroxylated substrates in concert with electron transfer from NADH to cytochrome b5 reductase then to cytochrome b5, the ultimate electron donor that primes the active site for substrate reduction. This Macaca fascicularis (Crab-eating macaque) protein is Mitochondrial amidoxime reducing component 2 (MTARC2).